Here is a 410-residue protein sequence, read N- to C-terminus: Multidrug resistance protein MdtM (410 aa).

Topologically, residues 1 to 11 (MPRFFARHAAT) are cytoplasmic. The helical transmembrane segment at 12–32 (LFFPMALILYDFAAYLSTDLI) threads the bilayer. The Periplasmic segment spans residues 33–48 (QPGIINVVRDFNADVS). The helical transmembrane segment at 49–69 (LAPAAVSLYLAGGMALQWLLG) threads the bilayer. Residues 70 to 78 (PLSDRIGRK) are Cytoplasmic-facing. A helical membrane pass occupies residues 79 to 99 (PVLITGALIFTLACAATMFTT). The Periplasmic portion of the chain corresponds to 100-103 (SMTQ). Residues 104–124 (FLIARAIQGTSICFIATVGYV) form a helical membrane-spanning segment. The Cytoplasmic portion of the chain corresponds to 125–140 (TVQEAFGQTKGIKLMA). The helical transmembrane segment at 141-161 (IITSIVLIAPIIGPLSGAALM) threads the bilayer. Residues 162 to 167 (HFVHWK) are Periplasmic-facing. The helical transmembrane segment at 168–188 (VLFAIIAVMGFISFVGLLLAM) threads the bilayer. Residues 189–216 (PETVKRGAVPFSAKSVLRDFRNVFCNRL) are Cytoplasmic-facing. The chain crosses the membrane as a helical span at residues 217 to 237 (FLFGAATISLSYIPMMSWVAV). Residues 238–251 (SPVILIDAGGLTTS) lie on the Periplasmic side of the membrane. Residues 252–272 (QFAWTQVPVFGAVIVANAIVA) traverse the membrane as a helical segment. Residues 273–282 (RFVKDPTEPR) lie on the Cytoplasmic side of the membrane. A helical membrane pass occupies residues 283–303 (FIWRAVPIQLVGLALLIIGNL). Topologically, residues 304–307 (LSPH) are periplasmic. Residues 308-328 (VWLWSVLGTSLYAFGIGLIFP) form a helical membrane-spanning segment. Residues 329-348 (TLFRFTLFSNNLPKGTVSAS) are Cytoplasmic-facing. Residues 349–369 (LNMVILMVMSVSVEIGRWLWF) form a helical membrane-spanning segment. The Periplasmic segment spans residues 370-373 (NGGR). A helical transmembrane segment spans residues 374–394 (LPFHLLAVVAGVIVVFTLAGL). Topologically, residues 395-410 (LNRVRQHQAAELAEEQ) are cytoplasmic.

Belongs to the major facilitator superfamily.

It is found in the cell inner membrane. Functionally, proton-dependent efflux pump. Confers resistance to a broad spectrum of chemically unrelated substrates. The sequence is that of Multidrug resistance protein MdtM (mdtM) from Escherichia coli O157:H7.